We begin with the raw amino-acid sequence, 119 residues long: Holo-[acyl-carrier-protein] synthase (119 aa).

Mg(2+) contacts are provided by D7 and E53.

This sequence belongs to the P-Pant transferase superfamily. AcpS family. Requires Mg(2+) as cofactor.

It localises to the cytoplasm. The catalysed reaction is apo-[ACP] + CoA = holo-[ACP] + adenosine 3',5'-bisphosphate + H(+). Functionally, transfers the 4'-phosphopantetheine moiety from coenzyme A to a Ser of acyl-carrier-protein. The chain is Holo-[acyl-carrier-protein] synthase from Dehalococcoides mccartyi (strain CBDB1).